The chain runs to 246 residues: UDP-N-acetyl-D-mannosaminuronic acid transferase (246 aa).

It belongs to the glycosyltransferase 26 family.

It carries out the reaction UDP-N-acetyl-alpha-D-mannosaminouronate + N-acetyl-alpha-D-glucosaminyl-di-trans,octa-cis-undecaprenyl diphosphate = beta-D-ManNAcA-(1-&gt;4)-alpha-D-GlcNAc-di-trans,octa-cis-undecaprenyl diphosphate + UDP + H(+). The protein operates within bacterial outer membrane biogenesis; enterobacterial common antigen biosynthesis. In terms of biological role, catalyzes the synthesis of Und-PP-GlcNAc-ManNAcA (Lipid II), the second lipid-linked intermediate involved in enterobacterial common antigen (ECA) synthesis. This is UDP-N-acetyl-D-mannosaminuronic acid transferase from Escherichia coli O157:H7.